Consider the following 161-residue polypeptide: Transcriptional repressor NrdR (161 aa).

Polar residues predominate over residues 1-11 (MRCPSCNSLDT). A disordered region spans residues 1-20 (MRCPSCNSLDTQVKDSRPTE). Residues 3–34 (CPSCNSLDTQVKDSRPTEDSSVIRRRRVCVTC) fold into a zinc finger. The ATP-cone domain occupies 49–139 (LTVIKRNGRR…VYRNFREAKD (91 aa)).

This sequence belongs to the NrdR family. Requires Zn(2+) as cofactor.

Functionally, negatively regulates transcription of bacterial ribonucleotide reductase nrd genes and operons by binding to NrdR-boxes. The polypeptide is Transcriptional repressor NrdR (Bradyrhizobium sp. (strain BTAi1 / ATCC BAA-1182)).